The primary structure comprises 370 residues: Cytochrome b (370 aa).

A run of 4 helical transmembrane segments spans residues F30 to F50, W74 to F96, V109 to V129, and F175 to I195. Residues H80 and H94 each coordinate heme b. Heme b-binding residues include H179 and H193. Position 198 (H198) interacts with a ubiquinone. 4 consecutive transmembrane segments (helical) span residues Y221–L240, V284–N304, F316–V336, and I342–F362.

This sequence belongs to the cytochrome b family. As to quaternary structure, the main subunits of complex b-c1 are: cytochrome b, cytochrome c1 and the Rieske protein. The cofactor is heme b.

It localises to the mitochondrion inner membrane. In terms of biological role, component of the ubiquinol-cytochrome c reductase complex (complex III or cytochrome b-c1 complex) that is part of the mitochondrial respiratory chain. The b-c1 complex mediates electron transfer from ubiquinol to cytochrome c. Contributes to the generation of a proton gradient across the mitochondrial membrane that is then used for ATP synthesis. This is Cytochrome b from Caenorhabditis elegans.